Consider the following 179-residue polypeptide: Large ribosomal subunit protein uL6 (179 aa).

It belongs to the universal ribosomal protein uL6 family. As to quaternary structure, part of the 50S ribosomal subunit.

Functionally, this protein binds to the 23S rRNA, and is important in its secondary structure. It is located near the subunit interface in the base of the L7/L12 stalk, and near the tRNA binding site of the peptidyltransferase center. The sequence is that of Large ribosomal subunit protein uL6 from Alkaliphilus oremlandii (strain OhILAs) (Clostridium oremlandii (strain OhILAs)).